A 208-amino-acid chain; its full sequence is Probable GTP-binding protein EngB (208 aa).

One can recognise an EngB-type G domain in the interval 18-187 (KQFEICVIGR…FALMKKVVIE (170 aa)). Residues 26–33 (GRSNVGKS), 52–56 (GRTQL), 69–72 (DLPG), 135–138 (NKVD), and 166–168 (VSA) each bind GTP. Mg(2+) is bound by residues S33 and T54.

This sequence belongs to the TRAFAC class TrmE-Era-EngA-EngB-Septin-like GTPase superfamily. EngB GTPase family. The cofactor is Mg(2+).

Functionally, necessary for normal cell division and for the maintenance of normal septation. In Ureaplasma urealyticum serovar 10 (strain ATCC 33699 / Western), this protein is Probable GTP-binding protein EngB.